The sequence spans 423 residues: MASALEQFVNSVRQLSSQGQMTQLCELINKSGELLAKNLSHLDTVLGALDVQEHSLGVLAVLFVKFSMPSIPDFETLFSQVQLFISTCNGEHIRYATDTFAGLCHQLTNALVERKQPLRGICVIRQAIDKMQMNANQLTSIHGDLCQLSLLAKCFKPALAYLDVDMMDICKENGAYDAKPFLCYYYYGGMIYTGLKNFERAMYFYEQAITTPAMAVSHIMLEAYKKYILVSLILHGKVQQLPKYTSQVVGRFIKPLSNAYHELAQVYSTNNPAELRNLVSKHNETFTRDNNMGLVKQCLSSLYKKNIQRLTKTFLTLSLQDMASRVQLSGAQEAEKYVLYMIEDGEIFASINQKDGMVCFHDSPEKYNNPAMLHNIDQEMLRCIDLDDRLKAMDQEITVNPQFVQKSMGSQEDDSGSKPSSYS.

Positions 197–365 (NFERAMYFYE…GMVCFHDSPE (169 aa)) constitute a PCI domain. Polar residues predominate over residues 401–410 (PQFVQKSMGS). Residues 401–423 (PQFVQKSMGSQEDDSGSKPSSYS) are disordered.

This sequence belongs to the CSN3 family. As to quaternary structure, component of the CSN complex, probably composed of cops1, cops2, cops3, cops4, cops5, cops6, cops7, cops8 and cops9.

It is found in the cytoplasm. The protein resides in the nucleus. Component of the COP9 signalosome complex (CSN), a complex involved in various cellular and developmental processes. The CSN complex is an essential regulator of the ubiquitin (Ubl) conjugation pathway by mediating the deneddylation of the cullin subunits of E3 ligase complexes, leading to modify the Ubl ligase activity. In Xenopus laevis (African clawed frog), this protein is COP9 signalosome complex subunit 3 (cops3).